The primary structure comprises 125 residues: Phosphoribosyl-AMP cyclohydrolase (125 aa).

D74 is a binding site for Mg(2+). C75 is a binding site for Zn(2+). Mg(2+) is bound by residues D76 and D78. Positions 92 and 99 each coordinate Zn(2+).

It belongs to the PRA-CH family. Homodimer. Mg(2+) serves as cofactor. Requires Zn(2+) as cofactor.

It is found in the cytoplasm. It catalyses the reaction 1-(5-phospho-beta-D-ribosyl)-5'-AMP + H2O = 1-(5-phospho-beta-D-ribosyl)-5-[(5-phospho-beta-D-ribosylamino)methylideneamino]imidazole-4-carboxamide. The protein operates within amino-acid biosynthesis; L-histidine biosynthesis; L-histidine from 5-phospho-alpha-D-ribose 1-diphosphate: step 3/9. In terms of biological role, catalyzes the hydrolysis of the adenine ring of phosphoribosyl-AMP. The polypeptide is Phosphoribosyl-AMP cyclohydrolase (Desulforapulum autotrophicum (strain ATCC 43914 / DSM 3382 / VKM B-1955 / HRM2) (Desulfobacterium autotrophicum)).